The primary structure comprises 197 residues: Segregation and condensation protein B (197 aa).

It belongs to the ScpB family. Homodimer. Homodimerization may be required to stabilize the binding of ScpA to the Smc head domains. Component of a cohesin-like complex composed of ScpA, ScpB and the Smc homodimer, in which ScpA and ScpB bind to the head domain of Smc. The presence of the three proteins is required for the association of the complex with DNA.

It is found in the cytoplasm. Its function is as follows. Participates in chromosomal partition during cell division. May act via the formation of a condensin-like complex containing Smc and ScpA that pull DNA away from mid-cell into both cell halves. The sequence is that of Segregation and condensation protein B from Halalkalibacterium halodurans (strain ATCC BAA-125 / DSM 18197 / FERM 7344 / JCM 9153 / C-125) (Bacillus halodurans).